Consider the following 397-residue polypeptide: Histidinol-phosphate aminotransferase (397 aa).

Lys247 is modified (N6-(pyridoxal phosphate)lysine).

Belongs to the class-II pyridoxal-phosphate-dependent aminotransferase family. Histidinol-phosphate aminotransferase subfamily. In terms of assembly, homodimer. Requires pyridoxal 5'-phosphate as cofactor.

The catalysed reaction is L-histidinol phosphate + 2-oxoglutarate = 3-(imidazol-4-yl)-2-oxopropyl phosphate + L-glutamate. It functions in the pathway amino-acid biosynthesis; L-histidine biosynthesis; L-histidine from 5-phospho-alpha-D-ribose 1-diphosphate: step 7/9. The protein is Histidinol-phosphate aminotransferase of Frankia casuarinae (strain DSM 45818 / CECT 9043 / HFP020203 / CcI3).